A 478-amino-acid chain; its full sequence is MLCTTISGPSFLEAKKQILRSLKECHCFEMRVDLLSVSCLELKKLMELAPISILAWKKPESCSQADWIDKMQSLAELNPNYLDLEKDFPEEDMIRIRQLHPQIKIIRSLHTSEHTDIIQLYAHMRSSAADYYKFAVSSSSTTDLLDICHQKRSLPENTTVVCLGGMGRPSRILSPILQNPFTYARSTGSSPVAPGQFSLKHHYFYNFASLSAQSPICALIGDTSRSIGHLTHNPFFSQLGVACPYIKLPLTPQELPKFFSTIRTQPFLGVSVTSPLKTAVLPFLDKQAPSVKASGSCNTLVIRQGEIEGHDTDGEGLFSVLMQHQIPLNNQRVAIIGAGGAAQSIATRLSRANCELLIFNRTKAHAEDLASRCQAKAFSLEELPLHRVSLIINCLPPSCTIPKAVAPCVVDINTIPKHSTFTQYARSQGSSIIYGHEMFTQQALLQFRLWFPTLSFKHLEKTFIRRAAVLASLFSIAP.

The segment at 1 to 208 (MLCTTISGPS…LKHHYFYNFA (208 aa)) is 3-dehydroquinate dehydratase. Residues serine 21, 29–31 (EMR), and 55–57 (AWK) contribute to the 3-dehydroquinate site. The active-site Proton donor/acceptor; for 3-dehydroquinate dehydratase activity is histidine 110. The active-site Schiff-base intermediate with substrate; for 3-dehydroquinate dehydratase activity is lysine 133. Positions 171 and 196 each coordinate 3-dehydroquinate. The segment at 209–478 (SLSAQSPICA…VLASLFSIAP (270 aa)) is shikimate 5-dehydrogenase. 226–228 (SIG) contributes to the shikimate binding site. Lysine 277 acts as the Proton acceptor; for shikimate dehydrogenase activity in catalysis. 2 residues coordinate shikimate: asparagine 298 and aspartate 313. Residues 337–341 (GAGGA), 360–362 (NRT), and glycine 435 contribute to the NADP(+) site. Glutamine 442 contributes to the shikimate binding site.

It in the N-terminal section; belongs to the type-I 3-dehydroquinase family. The protein in the C-terminal section; belongs to the shikimate dehydrogenase family.

The catalysed reaction is 3-dehydroquinate = 3-dehydroshikimate + H2O. It catalyses the reaction shikimate + NADP(+) = 3-dehydroshikimate + NADPH + H(+). Its pathway is metabolic intermediate biosynthesis; chorismate biosynthesis; chorismate from D-erythrose 4-phosphate and phosphoenolpyruvate: step 3/7. It participates in metabolic intermediate biosynthesis; chorismate biosynthesis; chorismate from D-erythrose 4-phosphate and phosphoenolpyruvate: step 4/7. In terms of biological role, bifunctional enzyme that catalyzes two sequential steps of the aromatic amino acids biosynthetic pathway. In the first reaction, the AroD domain catalyzes the cis-dehydration of 3-dehydroquinate (DHQ) and introduces the first double bond of the aromatic ring to yield 3-dehydroshikimate; in the second reaction, the AroE domain catalyzes the reversible NADPH linked reduction of 3-dehydroshikimate (DHSA) to yield shikimate (SA). The protein is Shikimate biosynthesis protein AroDE of Chlamydia trachomatis serovar D (strain ATCC VR-885 / DSM 19411 / UW-3/Cx).